The sequence spans 1503 residues: Translocase of chloroplast 159, chloroplastic (1503 aa).

Polar residues predominate over residues 1–24 (MDSKSVTPEPTNPFYASSGQSGKT). A disordered region spans residues 1–210 (MDSKSVTPEP…GGKVDVDDKS (210 aa)). A helical membrane pass occupies residues 21–37 (SGKTYASVVAAAAAAAA). At Ser71 the chain carries Phosphoserine. Composition is skewed to basic and acidic residues over residues 85-98 (KVSD…KEDS) and 176-210 (SESK…DDKS). Phosphoserine occurs at positions 210, 281, and 288. Disordered stretches follow at residues 298–338 (KFTS…DVEK) and 429–464 (VHNK…SEGD). Positions 447 to 456 (ESDKATEEGG) are enriched in basic and acidic residues. Phosphoserine occurs at positions 448, 461, 589, 609, 630, 632, and 665. The interval 610-633 (FGGKEVDQEPSGEGVTRVDGSESE) is disordered. Residues 781–804 (EEEKQKLEKLQSLRVKFLRLLQRL) are a coiled coil. Positions 853 to 1087 (IFSLNILVLG…RPQEPLDHRK (235 aa)) constitute an AIG1-type G domain. Residues 862-869 (GKAGVGKS) are G1. Residues 865–870 (GVGKSA) and 884–889 (DAFGLS) contribute to the GTP site. Residue Ser869 coordinates Mg(2+). The homodimerization stretch occupies residues 884-887 (DAFG). The interval 889–893 (STTSV) is G2. A G3 region spans residues 909–912 (DTPG). A homodimerization region spans residues 947–952 (RLDTQT). Positions 981 to 984 (THAA) are G4. Residues His982 and 1035–1036 (EN) each bind GTP. Residues 1035–1037 (ENH) form a G5 region. Positions 1175-1203 (DYRVKLLQKKQWREELKRMKEMKKNGKKL) form a coiled coil. The tract at residues 1203-1222 (LGESEFGYPGEEDDPENGAP) is disordered.

It belongs to the TRAFAC class TrmE-Era-EngA-EngB-Septin-like GTPase superfamily. AIG1/Toc34/Toc159-like paraseptin GTPase family. TOC159 subfamily. Homodimer and heterodimer with TOC33. Part of the TOC core complex that includes 1 protein for the specific recognition of transit peptides surrounded by a ring composed of four proteins forming translocation channels, and four to five GTP-binding proteins providing energy. This core complex can interact with components of the TIC complex to form a larger import complex. Chloroplastic protein precursor such as prSS (precursor of the RuBisCO small subunit) interacts with these complexes. The TOC complex contains a specific subset of polar lipids such as digalactosyldiacylglyceride (DGDG), phosphatidylcholine (PC) and phosphatidylglycerol (PG). Interacts with SP1. Requires Mg(2+) as cofactor. In terms of processing, phosphorylated by KOC1.

The protein resides in the plastid. Its subcellular location is the chloroplast outer membrane. It localises to the cytoplasm. Its function is as follows. GTPase involved in protein precursor import into chloroplasts. Seems to recognize chloroplast-destined precursor proteins and regulate their presentation to the translocation channel through GTP hydrolysis. Required for chloroplast biogenesis. Probably specialized in the import of nuclear encoded photosynthetic preproteins from the cytoplasm to the chloroplast. The polypeptide is Translocase of chloroplast 159, chloroplastic (Arabidopsis thaliana (Mouse-ear cress)).